The sequence spans 822 residues: ATP-dependent zinc metalloprotease FTSH 7, chloroplastic (822 aa).

3 stretches are compositionally biased toward low complexity: residues 1–34, 80–94, and 101–122; these read MASASAAAETLAAASLPVASPSRSLLRPLPRRAS, AEASGPGEASSSSSG, and AAAAAEAGGDGASTSTTSAAAT. Disordered stretches follow at residues 1 to 44 and 67 to 136; these read MASA…ASVR and PAAR…ENKW. A chloroplast-targeting transit peptide spans 1-70; it reads MASASAAAET…RVLRRPPAAR (70 aa). 2 helical membrane passes run 154–174 and 288–308; these read IVQGREMGFLLLQLGFAIFAL and GGLLNSALVALIYVVLIAVVL. 386 to 393 serves as a coordination point for ATP; the sequence is GLPGTGKT. His-611 is a binding site for Zn(2+). The active site involves Glu-612. 2 residues coordinate Zn(2+): His-615 and Asp-694.

The protein in the N-terminal section; belongs to the AAA ATPase family. In the C-terminal section; belongs to the peptidase M41 family. Zn(2+) serves as cofactor.

The protein resides in the plastid. It localises to the chloroplast thylakoid membrane. Probable ATP-dependent zinc metallopeptidase. This Oryza sativa subsp. japonica (Rice) protein is ATP-dependent zinc metalloprotease FTSH 7, chloroplastic (FTSH7).